We begin with the raw amino-acid sequence, 494 residues long: Glycerol kinase (494 aa).

Residue Thr12 participates in ADP binding. 3 residues coordinate ATP: Thr12, Thr13, and Ser14. Thr12 is a sn-glycerol 3-phosphate binding site. Arg16 lines the ADP pocket. Positions 82, 83, 134, and 244 each coordinate sn-glycerol 3-phosphate. Glycerol contacts are provided by Arg82, Glu83, Tyr134, Asp244, and Gln245. ADP is bound by residues Thr266 and Gly309. Residues Thr266, Gly309, Gln313, and Gly410 each contribute to the ATP site. ADP is bound by residues Gly410 and Asn414.

The protein belongs to the FGGY kinase family. As to quaternary structure, homotetramer and homodimer (in equilibrium).

The enzyme catalyses glycerol + ATP = sn-glycerol 3-phosphate + ADP + H(+). It participates in polyol metabolism; glycerol degradation via glycerol kinase pathway; sn-glycerol 3-phosphate from glycerol: step 1/1. Activated by phosphorylation and inhibited by fructose 1,6-bisphosphate (FBP). In terms of biological role, key enzyme in the regulation of glycerol uptake and metabolism. Catalyzes the phosphorylation of glycerol to yield sn-glycerol 3-phosphate. The protein is Glycerol kinase of Desulfitobacterium hafniense (strain DSM 10664 / DCB-2).